The sequence spans 530 residues: Glucose-6-phosphate isomerase (530 aa).

Glu-322 serves as the catalytic Proton donor. Residues His-351 and Lys-455 contribute to the active site.

The protein belongs to the GPI family.

Its subcellular location is the cytoplasm. The catalysed reaction is alpha-D-glucose 6-phosphate = beta-D-fructose 6-phosphate. It functions in the pathway carbohydrate biosynthesis; gluconeogenesis. Its pathway is carbohydrate degradation; glycolysis; D-glyceraldehyde 3-phosphate and glycerone phosphate from D-glucose: step 2/4. Catalyzes the reversible isomerization of glucose-6-phosphate to fructose-6-phosphate. The sequence is that of Glucose-6-phosphate isomerase from Geotalea daltonii (strain DSM 22248 / JCM 15807 / FRC-32) (Geobacter daltonii).